The chain runs to 1219 residues: Cullin-associated NEDD8-dissociated protein 1 (1219 aa).

The residue at position 2 (alanine 2) is an N-acetylalanine. 18 HEAT repeats span residues 44-81 (DLEVRLSSIILQQLDDVAGDVSGLAVKCLAPLVKKVGE), 83-119 (RIVEMTNKLCDKLLHGKDQHRDTASIALRTVVAQIAP), 209-244 (KATVEVVKNLSNRNAKSEITRTNIQMIGALCRAVGY), 248-288 (THLG…RCPR), 327-363 (EEDDESANEYTDDEDASWKVRRAAAKCLAGLIVSRSE), 367-404 (KVYQEACPKLIDRFKEREENVKMDVFNTFIDLLRQTGN), 423-460 (QEVSKIVKSINRQLREKSVKTKVGAFSVLRELVVVLPD), 464-503 (DHIGSLVPGIERALNDKSSTSNLKIEALVFTKLVLASHAP), 599-636 (AELPSCLPVLVDRMGNEITRLTAVKAFSVIATSPLHIN), 639-676 (CVLDHLIAELTGFLRKANRVLRQATLITMNTLVTAYGD), 808-848 (KNCS…RKDL), 850-883 (AHAGIETIVIESFQSPFEEIKSAASYALGNIAVG), 927-964 (SSVEKILALLFNHCESEEEGVRNVVAECLGKMALIEPE), 966-998 (LVPALQVRTTSPAAFTRATVVTAVKYSVVERPE), 1002-1039 (EIIFPQISSFLMLIKDGDRHVRRAAVSALSTFAHYKPN), 1043-1079 (GLLPELLPLLYDQTVIKKELIRTVDLGPFKHVVDDGL), 1101-1137 (NPSSFIVPFLKSGLEDHYDLKMLCHLILSLLADKCPS), and 1141-1180 (AVLDSLVEPLHKTISFKPKQDAVKQEHDRNEDMIRSALRA). Positions 311–340 (FTDNMEEDTDNETLEDEEDDESANEYTDDE) are disordered. Over residues 314 to 340 (NMEEDTDNETLEDEEDDESANEYTDDE) the composition is skewed to acidic residues.

The protein belongs to the CAND family. In terms of assembly, interacts with CUL1 and CUL4. Binds unneddylated CUL1, but cannot bind CUL1 once it has been neddylated. As to expression, highly expressed in roots. Expressed in stems, flowers and siliques.

Functionally, key assembly factor of SCF (SKP1-CUL1-F-box protein) E3 ubiquitin ligase complexes that promotes the exchange of the substrate-recognition F-box subunit in SCF complexes, thereby playing a key role in the cellular repertoire of SCF complexes. Acts as a F-box protein exchange factor. Required for SCF(TIR1) function. Modulates SCF(TIR1) function through its interactions with the CUL1 subunit. Represses photomorphogenesis by promoting HY5 degradation in darkness. The protein is Cullin-associated NEDD8-dissociated protein 1 (CAND1) of Arabidopsis thaliana (Mouse-ear cress).